The sequence spans 309 residues: Ornithine carbamoyltransferase (309 aa).

Residues 56 to 59 (STRT), Gln83, Arg107, and 134 to 137 (HPCQ) contribute to the carbamoyl phosphate site. L-ornithine-binding positions include Asn165, Asp223, and 227-228 (SM). Carbamoyl phosphate is bound by residues 263-264 (CL) and Arg291.

The protein belongs to the aspartate/ornithine carbamoyltransferase superfamily. OTCase family.

The protein resides in the cytoplasm. It carries out the reaction carbamoyl phosphate + L-ornithine = L-citrulline + phosphate + H(+). It participates in amino-acid biosynthesis; L-arginine biosynthesis; L-arginine from L-ornithine and carbamoyl phosphate: step 1/3. Its function is as follows. Reversibly catalyzes the transfer of the carbamoyl group from carbamoyl phosphate (CP) to the N(epsilon) atom of ornithine (ORN) to produce L-citrulline. This Burkholderia cenocepacia (strain HI2424) protein is Ornithine carbamoyltransferase.